The primary structure comprises 269 residues: NAD kinase (269 aa).

The active-site Proton acceptor is aspartate 45. Residues 45-46, 121-122, arginine 147, aspartate 149, 160-165, and alanine 184 each bind NAD(+); these read DG, NE, and TAYNRS.

The protein belongs to the NAD kinase family. The cofactor is a divalent metal cation.

It localises to the cytoplasm. The catalysed reaction is NAD(+) + ATP = ADP + NADP(+) + H(+). In terms of biological role, involved in the regulation of the intracellular balance of NAD and NADP, and is a key enzyme in the biosynthesis of NADP. Catalyzes specifically the phosphorylation on 2'-hydroxyl of the adenosine moiety of NAD to yield NADP. The sequence is that of NAD kinase from Pediococcus pentosaceus (strain ATCC 25745 / CCUG 21536 / LMG 10740 / 183-1w).